The sequence spans 983 residues: Ephrin type-A receptor 3 (983 aa).

Residues 1–20 (MDCQLSILLLLSCSVLDSFG) form the signal peptide. Over 21–541 (ELIPQPSNEV…SFSISGESSQ (521 aa)) the chain is Extracellular. In terms of domain architecture, Eph LBD spans 29 to 207 (EVNLLDSKTI…YFKKCPFTVK (179 aa)). 5 N-linked (GlcNAc...) asparagine glycosylation sites follow: asparagine 232, asparagine 337, asparagine 391, asparagine 404, and asparagine 493. 2 consecutive Fibronectin type-III domains span residues 325-435 (PPSS…TNQA) and 436-531 (APSP…TSPD). A helical membrane pass occupies residues 542-565 (VVMIAISAAVAIILLTVVIYVLIG). Topologically, residues 566-983 (RFCGYKSKHG…TQSKNGPVPV (418 aa)) are cytoplasmic. 2 positions are modified to phosphotyrosine; by autocatalysis: tyrosine 596 and tyrosine 602. Residues 621–882 (ISIDKVVGAG…QIVSILDKLI (262 aa)) enclose the Protein kinase domain. Residues 628-633 (GAGEFG), lysine 653, and 700-706 (EYMENGS) contribute to the ATP site. At tyrosine 701 the chain carries Phosphotyrosine; by autocatalysis. Residue aspartate 746 is the Proton acceptor of the active site. Position 750–751 (750–751 (RN)) interacts with ATP. Position 779 is a phosphotyrosine; by autocatalysis (tyrosine 779). Residues 911–975 (TTFRTTGDWL…ISSIKALETQ (65 aa)) form the SAM domain. Position 937 is a phosphotyrosine (tyrosine 937). The short motif at 981–983 (VPV) is the PDZ-binding element.

The protein belongs to the protein kinase superfamily. Tyr protein kinase family. Ephrin receptor subfamily. As to quaternary structure, heterotetramer upon binding of the ligand. The heterotetramer is composed of an ephrin dimer and a receptor dimer. Oligomerization is probably required to induce biological responses. Forms a ternary EFNA5-EPHA3-ADAM10 complex mediating EFNA5 extracellular domain shedding by ADAM10 which regulates the EFNA5-EPHA3 complex internalization and function. Interacts with NCK1 (via SH2 domain); mediates EFNA5-EPHA3 signaling. Interacts (phosphorylated) with PTPN1; dephosphorylates EPHA3 and may regulate its trafficking and function. Interacts (phosphorylated) with CRK; mediates EFNA5-EPHA3 signaling through RHOA GTPase activation. In terms of processing, autophosphorylates upon activation by EFNA5. Phosphorylation on Tyr-602 mediates interaction with NCK1. Dephosphorylated by PTPN1. In terms of tissue distribution, widely expressed. Highest level in placenta.

The protein localises to the cell membrane. The protein resides in the secreted. It catalyses the reaction L-tyrosyl-[protein] + ATP = O-phospho-L-tyrosyl-[protein] + ADP + H(+). Its function is as follows. Receptor tyrosine kinase which binds promiscuously membrane-bound ephrin family ligands residing on adjacent cells, leading to contact-dependent bidirectional signaling into neighboring cells. The signaling pathway downstream of the receptor is referred to as forward signaling while the signaling pathway downstream of the ephrin ligand is referred to as reverse signaling. Highly promiscuous for ephrin-A ligands it binds preferentially EFNA5. Upon activation by EFNA5 regulates cell-cell adhesion, cytoskeletal organization and cell migration. Plays a role in cardiac cells migration and differentiation and regulates the formation of the atrioventricular canal and septum during development probably through activation by EFNA1. Involved in the retinotectal mapping of neurons. May also control the segregation but not the guidance of motor and sensory axons during neuromuscular circuit development. The polypeptide is Ephrin type-A receptor 3 (EPHA3) (Homo sapiens (Human)).